A 483-amino-acid polypeptide reads, in one-letter code: Aspartyl/glutamyl-tRNA(Asn/Gln) amidotransferase subunit B (483 aa).

It belongs to the GatB/GatE family. GatB subfamily. Heterotrimer of A, B and C subunits.

The enzyme catalyses L-glutamyl-tRNA(Gln) + L-glutamine + ATP + H2O = L-glutaminyl-tRNA(Gln) + L-glutamate + ADP + phosphate + H(+). It carries out the reaction L-aspartyl-tRNA(Asn) + L-glutamine + ATP + H2O = L-asparaginyl-tRNA(Asn) + L-glutamate + ADP + phosphate + 2 H(+). In terms of biological role, allows the formation of correctly charged Asn-tRNA(Asn) or Gln-tRNA(Gln) through the transamidation of misacylated Asp-tRNA(Asn) or Glu-tRNA(Gln) in organisms which lack either or both of asparaginyl-tRNA or glutaminyl-tRNA synthetases. The reaction takes place in the presence of glutamine and ATP through an activated phospho-Asp-tRNA(Asn) or phospho-Glu-tRNA(Gln). This is Aspartyl/glutamyl-tRNA(Asn/Gln) amidotransferase subunit B from Rickettsia rickettsii (strain Iowa).